We begin with the raw amino-acid sequence, 607 residues long: Rap1 GTPase-GDP dissociation stimulator 1-B (607 aa).

ARM repeat units lie at residues 79–118 (ELMR…NICY), 170–211 (DSLQ…NLAE), 347–390 (DGNC…NLAI), 391–431 (PVVN…MLID), and 479–519 (SKDV…LIAA).

In terms of assembly, interacts with ralB. Probably interacts with the post-translationally isoprenylated (geranyl-geranylation) forms of ral proteins. Interacts with both GDP-bound and GTP-bound forms of ralA, but interaction is much stronger with ralA-GDP.

The protein resides in the cytoplasm. It localises to the cytosol. Its subcellular location is the endoplasmic reticulum. The protein localises to the mitochondrion. Functionally, stimulates GDP/GTP exchange reaction of a group of small GTP-binding proteins (G proteins) including Rap1a/Rap1b, RhoA, RhoB and KRas, by stimulating the dissociation of GDP from and the subsequent binding of GTP to each small G protein. This Xenopus laevis (African clawed frog) protein is Rap1 GTPase-GDP dissociation stimulator 1-B (rap1gds1-b).